We begin with the raw amino-acid sequence, 329 residues long: Tyrosine recombinase XerC 1 (329 aa).

Residues 14-101 form the Core-binding (CB) domain; it reads APPHPQIGAY…AWRGWYQWLA (88 aa). Positions 123–320 constitute a Tyr recombinase domain; the sequence is RLPKALSVEQ…DFQHLAKIYD (198 aa). Active-site residues include Arg-163, Lys-198, His-272, Arg-275, and His-298. The O-(3'-phospho-DNA)-tyrosine intermediate role is filled by Tyr-307.

It belongs to the 'phage' integrase family. XerC subfamily. Forms a cyclic heterotetrameric complex composed of two molecules of XerC and two molecules of XerD.

Its subcellular location is the cytoplasm. In terms of biological role, site-specific tyrosine recombinase, which acts by catalyzing the cutting and rejoining of the recombining DNA molecules. The XerC-XerD complex is essential to convert dimers of the bacterial chromosome into monomers to permit their segregation at cell division. It also contributes to the segregational stability of plasmids. In Ralstonia nicotianae (strain ATCC BAA-1114 / GMI1000) (Ralstonia solanacearum), this protein is Tyrosine recombinase XerC 1 (xerC1).